Reading from the N-terminus, the 32-residue chain is Photosystem II reaction center protein T (32 aa).

A helical transmembrane segment spans residues 3 to 23 (AITYTFILFLTLGLLFFAVAF).

Belongs to the PsbT family. PSII is composed of 1 copy each of membrane proteins PsbA, PsbB, PsbC, PsbD, PsbE, PsbF, PsbH, PsbI, PsbJ, PsbK, PsbL, PsbM, PsbT, PsbX, PsbY, PsbZ, Psb30/Ycf12, peripheral proteins PsbO, CyanoQ (PsbQ), PsbU, PsbV and a large number of cofactors. It forms dimeric complexes.

It localises to the cellular thylakoid membrane. Found at the monomer-monomer interface of the photosystem II (PS II) dimer, plays a role in assembly and dimerization of PSII. PSII is a light-driven water plastoquinone oxidoreductase, using light energy to abstract electrons from H(2)O, generating a proton gradient subsequently used for ATP formation. In Synechococcus sp. (strain JA-2-3B'a(2-13)) (Cyanobacteria bacterium Yellowstone B-Prime), this protein is Photosystem II reaction center protein T.